The sequence spans 291 residues: Ribosomal RNA small subunit methyltransferase A (291 aa).

S-adenosyl-L-methionine contacts are provided by histidine 37, leucine 39, glycine 64, glutamate 85, aspartate 110, and asparagine 131.

It belongs to the class I-like SAM-binding methyltransferase superfamily. rRNA adenine N(6)-methyltransferase family. RsmA subfamily.

It localises to the cytoplasm. It carries out the reaction adenosine(1518)/adenosine(1519) in 16S rRNA + 4 S-adenosyl-L-methionine = N(6)-dimethyladenosine(1518)/N(6)-dimethyladenosine(1519) in 16S rRNA + 4 S-adenosyl-L-homocysteine + 4 H(+). Its function is as follows. Specifically dimethylates two adjacent adenosines (A1518 and A1519) in the loop of a conserved hairpin near the 3'-end of 16S rRNA in the 30S particle. May play a critical role in biogenesis of 30S subunits. The protein is Ribosomal RNA small subunit methyltransferase A of Dehalococcoides mccartyi (strain ATCC BAA-2266 / KCTC 15142 / 195) (Dehalococcoides ethenogenes (strain 195)).